We begin with the raw amino-acid sequence, 142 residues long: Hemoglobin subunit alpha-A (142 aa).

A Globin domain is found at 2–142; it reads VLSGSDKTNV…VGNVLTAKYR (141 aa). Histidine 59 lines the O2 pocket. Histidine 88 contacts heme b.

Belongs to the globin family. In terms of assembly, heterotetramer of two alpha chains and two beta chains. In terms of tissue distribution, red blood cells.

Involved in oxygen transport from the lung to the various peripheral tissues. In Ara ararauna (Blue-and-yellow macaw), this protein is Hemoglobin subunit alpha-A (HBAA).